The sequence spans 159 residues: 3-hydroxyacyl-[acyl-carrier-protein] dehydratase FabZ (159 aa).

The active site involves H58.

Belongs to the thioester dehydratase family. FabZ subfamily.

Its subcellular location is the cytoplasm. The enzyme catalyses a (3R)-hydroxyacyl-[ACP] = a (2E)-enoyl-[ACP] + H2O. Involved in unsaturated fatty acids biosynthesis. Catalyzes the dehydration of short chain beta-hydroxyacyl-ACPs and long chain saturated and unsaturated beta-hydroxyacyl-ACPs. This is 3-hydroxyacyl-[acyl-carrier-protein] dehydratase FabZ from Helicobacter pylori (strain J99 / ATCC 700824) (Campylobacter pylori J99).